A 1774-amino-acid chain; its full sequence is Protein TIC 214 (1774 aa).

6 helical membrane passes run 19 to 39, 68 to 88, 91 to 111, 133 to 153, 176 to 196, and 227 to 247; these read IINS…FSIG, FIAG…HLAL, PHTI…WNNH, VFLN…SSML, VGWL…LVWI, and IFSI…PSPI. Basic and acidic residues predominate over residues 254–268; that stretch reads GTSETEERGGTKQDQ. The segment at 254–275 is disordered; that stretch reads GTSETEERGGTKQDQEVSTEEA.

This sequence belongs to the TIC214 family. Part of the Tic complex.

It localises to the plastid. It is found in the chloroplast inner membrane. Involved in protein precursor import into chloroplasts. May be part of an intermediate translocation complex acting as a protein-conducting channel at the inner envelope. In Aethionema cordifolium (Lebanon stonecress), this protein is Protein TIC 214.